Reading from the N-terminus, the 756-residue chain is MASTRSIELEHFEERDKRPRPGSRRGAPSSSGGSSISGPKGNGLIPSPAHSAHCSFYRTRTLQALSSEKKAKKARFYRNGDRYFKGLVFAISNDRFRSFDALLIELTRSLSDNVNLPQGVRTIYTIDGSRKVTSLDELLEGESYVCASNEPFRKVDYTKNVNPNWSVNIKGGTTRTLAVASAKSEVKESKDFIKPKLVTVIRSGVKPRKAVRILLNKKTAHSFEQVLTDITEAIKLDSGVVKRLCTLDGKQVTCLQDFFGDDDVFIACGPEKYRYAQDDFVLDHSECRVLKSSYSRASAAKYSGSRSPGFSRRSKSPASVNGTPSSQLSTPKSTKSSSSSPTSPGSFRGLKQISAQGRSSSNVNGGPELDRCLSPEGVNGNRCSESFPLLEKYRIGKVIGDGNFAVVKECVDRYTGKEFALKIIDKAKCCGKEHLIENEVSILRRVKHPNIIMLVEEMETATDLFLVMELVKGGDLFDAITSSTKYTERDGSAMVYNLANALRYLHSLSIVHRDIKPENLLVCEYPDGTKSLKLGDFGLATVVEGPLYTVCGTPTYVAPEIIAETGYGLKVDVWAAGVITYILLCGFPPFRSENNLQEDLFDQILAGKLEFPAPYWDNITDSAKELISQMLQVNVEARCTAGEILSHPWVSDDASQENNMQAEVTGKLKQHFNNALPKQNSTTTGVSVIMNTALDKEGQIFCSKLCQDSSRPSREQTSPVPPSAQEAPPPLESPRPPGPPATSGCDLAGTWRRHRD.

Residues 1-44 form a disordered region; it reads MASTRSIELEHFEERDKRPRPGSRRGAPSSSGGSSISGPKGNGL. Residues 7–19 are compositionally biased toward basic and acidic residues; the sequence is IELEHFEERDKRP. The segment covering 24–43 has biased composition (low complexity); the sequence is RRGAPSSSGGSSISGPKGNG. Thr-61 is modified (phosphothreonine). 2 consecutive Doublecortin domains span residues 72 to 158 and 196 to 279; these read KKAR…VDYT and KLVT…AQDD. 2 stretches are compositionally biased toward low complexity: residues 301-311 and 323-346; these read KYSGSRSPGFS and TPSS…SPGS. The segment at 301 to 375 is disordered; it reads KYSGSRSPGF…GPELDRCLSP (75 aa). Polar residues predominate over residues 353–364; that stretch reads ISAQGRSSSNVN. At Ser-361 the chain carries Phosphoserine. A Protein kinase domain is found at 393-650; the sequence is YRIGKVIGDG…AGEILSHPWV (258 aa). ATP-binding positions include 399-407 and Lys-422; that span reads IGDGNFAVV. The active-site Proton acceptor is Asp-514. Phosphoserine is present on Ser-646. Position 665 is a phosphothreonine (Thr-665). The tract at residues 707-756 is disordered; sequence QDSSRPSREQTSPVPPSAQEAPPPLESPRPPGPPATSGCDLAGTWRRHRD. A compositionally biased stretch (pro residues) spans 719 to 740; that stretch reads PVPPSAQEAPPPLESPRPPGPP.

It belongs to the protein kinase superfamily. CAMK Ser/Thr protein kinase family. CaMK subfamily. Binds to and stabilizes microtubules. Interacts with MAPK8IP1/JIP-1, MAPK8IP2/JIP-2, MAPK9/JNK2, PPP1R9B/NEURABIN-2 and actin. Autophosphorylated. In terms of tissue distribution, expressed in the central and peripheral nervous system including the brain, spinal cord, cranial and dorsal root ganglia and in the parasympathetic ganglia. Present in neurons, but not in glial cells, in most forebrain areas. Strong expression in the hippocampal CA1 pyramidal cell layer. Expressed in the photoreceptor sensory cilium complex and in eyes. Also detected in individual cells of the olfactory epithelium.

Its subcellular location is the cytoplasm. It localises to the cytoskeleton. The catalysed reaction is L-seryl-[protein] + ATP = O-phospho-L-seryl-[protein] + ADP + H(+). It carries out the reaction L-threonyl-[protein] + ATP = O-phospho-L-threonyl-[protein] + ADP + H(+). Functionally, protein kinase with a significantly reduced Ca(2+)+/CAM affinity and dependence compared to other members of the CaMK family. May play a role in the down-regulation of CRE-dependent gene activation probably by phosphorylation of the CREB coactivator CRTC2/TORC2 and the resulting retention of TORC2 in the cytoplasm. The polypeptide is Serine/threonine-protein kinase DCLK2 (Dclk2) (Mus musculus (Mouse)).